Reading from the N-terminus, the 940-residue chain is Translation initiation factor IF-2 (940 aa).

2 disordered regions span residues 48–264 (ESFG…VESK) and 278–351 (QVAE…TERK). 5 stretches are compositionally biased toward basic and acidic residues: residues 65 to 95 (SKPEKVDETPKVETAKVEKAKETQPVVKEEV), 112 to 125 (FKAEREARAKEQAA), 155 to 206 (NNER…REAA), 232 to 258 (RTSEERFRQAQEAKKQPKKPKEIKFEE), and 292 to 301 (ARPDKKRDFN). The span at 314–332 (NRNSQNQVRNQRTSNWNNN) shows a compositional bias: low complexity. Residues 442–609 (ERPPVVTIMG…TVLLVAEIQE (168 aa)) form the tr-type G domain. Positions 451 to 458 (GHVDHGKT) are G1. Position 451–458 (451–458 (GHVDHGKT)) interacts with GTP. The tract at residues 476-480 (GITQH) is G2. The tract at residues 497 to 500 (DTPG) is G3. GTP is bound by residues 497–501 (DTPGH) and 551–554 (NKID). Positions 551–554 (NKID) are G4. The tract at residues 587-589 (SAK) is G5.

The protein belongs to the TRAFAC class translation factor GTPase superfamily. Classic translation factor GTPase family. IF-2 subfamily.

Its subcellular location is the cytoplasm. Functionally, one of the essential components for the initiation of protein synthesis. Protects formylmethionyl-tRNA from spontaneous hydrolysis and promotes its binding to the 30S ribosomal subunits. Also involved in the hydrolysis of GTP during the formation of the 70S ribosomal complex. This Streptococcus suis (strain 98HAH33) protein is Translation initiation factor IF-2.